A 513-amino-acid chain; its full sequence is Proline-rich receptor-like protein kinase PERK3 (513 aa).

Residues 1–123 are Extracellular-facing; that stretch reads MARSNRCVPQ…SPPSPSRLST (123 aa). N-linked (GlcNAc...) asparagine glycosylation is present at asparagine 11. Positions 27-36 are enriched in polar residues; it reads LKSRWQQITM. Residues 27–119 are disordered; that stretch reads LKSRWQQITM…GFSLSPPSPS (93 aa). Residue asparagine 66 is glycosylated (N-linked (GlcNAc...) asparagine). Low complexity predominate over residues 78–89; the sequence is PSTSTPPRLGNR. The span at 99 to 111 shows a compositional bias: polar residues; the sequence is GQEPTTPTMTPGF. Residues 124–144 traverse the membrane as a helical segment; the sequence is GAVVGISIGGGVFVLTLIFFL. Over 145–513 the chain is Cytoplasmic; the sequence is CKKKRPRDDK…TAQRYGGDSL (369 aa). Threonine 172 bears the Phosphothreonine mark. The Protein kinase domain occupies 183–334; sequence FSEANLLGEG…DFGLAKIALD (152 aa). Residues 189 to 197 and lysine 211 contribute to the ATP site; that span reads LGEGGFGFV. Position 256 is a phosphotyrosine (tyrosine 256). Aspartate 307 (proton acceptor) is an active-site residue. Serine 340 bears the Phosphoserine mark. 2 positions are modified to phosphothreonine: threonine 341 and threonine 346. Position 354 is a phosphotyrosine (tyrosine 354).

This sequence belongs to the protein kinase superfamily. Ser/Thr protein kinase family. Expressed at low levels in inflorescence bolt, flower buds, siliques, roots, seedlings and leaves.

Its subcellular location is the cell membrane. The catalysed reaction is L-seryl-[protein] + ATP = O-phospho-L-seryl-[protein] + ADP + H(+). It carries out the reaction L-threonyl-[protein] + ATP = O-phospho-L-threonyl-[protein] + ADP + H(+). The protein is Proline-rich receptor-like protein kinase PERK3 (PERK3) of Arabidopsis thaliana (Mouse-ear cress).